A 450-amino-acid polypeptide reads, in one-letter code: 3-phosphoshikimate 1-carboxyvinyltransferase (450 aa).

Positions 1–23 (MSSHGAPIPMTSSACGPLTGEAR) are disordered. The 3-phosphoshikimate site is built by Lys28, Ser29, and Arg33. A phosphoenolpyruvate-binding site is contributed by Lys28. The phosphoenolpyruvate site is built by Gly101 and Arg129. 3-phosphoshikimate is bound by residues Ser174, Gln176, Asp327, and Lys354. Phosphoenolpyruvate is bound at residue Gln176. Residue Asp327 is the Proton acceptor of the active site. Arg358 and Arg403 together coordinate phosphoenolpyruvate.

The protein belongs to the EPSP synthase family. In terms of assembly, monomer.

It is found in the cytoplasm. It catalyses the reaction 3-phosphoshikimate + phosphoenolpyruvate = 5-O-(1-carboxyvinyl)-3-phosphoshikimate + phosphate. Its pathway is metabolic intermediate biosynthesis; chorismate biosynthesis; chorismate from D-erythrose 4-phosphate and phosphoenolpyruvate: step 6/7. In terms of biological role, catalyzes the transfer of the enolpyruvyl moiety of phosphoenolpyruvate (PEP) to the 5-hydroxyl of shikimate-3-phosphate (S3P) to produce enolpyruvyl shikimate-3-phosphate and inorganic phosphate. The protein is 3-phosphoshikimate 1-carboxyvinyltransferase of Roseobacter denitrificans (strain ATCC 33942 / OCh 114) (Erythrobacter sp. (strain OCh 114)).